The primary structure comprises 3120 residues: DNA-directed RNA polymerase subunit beta'' (3120 aa).

Residues C323, C396, C403, and C406 each contribute to the Zn(2+) site. Residues 595-1130 (FIGEGKQNVL…LKTLVLKKWF (536 aa)) form an insert-1 region. The insert-2 stretch occupies residues 1796–2346 (KGHLVAYARP…NGIIQAKSLL (551 aa)). The segment at 2422–2610 (NSNFLENTHF…PEGEGEKDMT (189 aa)) is insert-3. Residues 2726–2801 (FSKKRWKKSI…KQNQTIILAL (76 aa)) form an insert-4 region. Positions 2856-2996 (ASKMSEYMFS…LNQLLSNNLD (141 aa)) are insert-5. The segment at 2926–2956 (EGIDSSKIPSSNIPEGKVTQNNKRKSTRKNV) is disordered. Over residues 2932 to 2946 (KIPSSNIPEGKVTQN) the composition is skewed to polar residues.

The protein belongs to the RNA polymerase beta' chain family. RpoC2 subfamily. In terms of assembly, in plastids the minimal PEP RNA polymerase catalytic core is composed of four subunits: alpha, beta, beta', and beta''. When a (nuclear-encoded) sigma factor is associated with the core the holoenzyme is formed, which can initiate transcription. Requires Zn(2+) as cofactor.

The protein localises to the plastid. It localises to the chloroplast. It catalyses the reaction RNA(n) + a ribonucleoside 5'-triphosphate = RNA(n+1) + diphosphate. In terms of biological role, DNA-dependent RNA polymerase catalyzes the transcription of DNA into RNA using the four ribonucleoside triphosphates as substrates. In Chlamydomonas reinhardtii (Chlamydomonas smithii), this protein is DNA-directed RNA polymerase subunit beta''.